A 375-amino-acid chain; its full sequence is 23S rRNA (uracil(747)-C(5))-methyltransferase RlmC (375 aa).

Positions 3, 11, 14, and 87 each coordinate [4Fe-4S] cluster. S-adenosyl-L-methionine is bound by residues Q212, F241, E262, and N307. The active-site Nucleophile is the C334.

Belongs to the class I-like SAM-binding methyltransferase superfamily. RNA M5U methyltransferase family. RlmC subfamily.

The catalysed reaction is uridine(747) in 23S rRNA + S-adenosyl-L-methionine = 5-methyluridine(747) in 23S rRNA + S-adenosyl-L-homocysteine + H(+). Catalyzes the formation of 5-methyl-uridine at position 747 (m5U747) in 23S rRNA. This Salmonella agona (strain SL483) protein is 23S rRNA (uracil(747)-C(5))-methyltransferase RlmC.